Reading from the N-terminus, the 512-residue chain is Methionine--tRNA ligase (512 aa).

A 'HIGH' region motif is present at residues 11 to 21 (YYASGKPHIGH). 4 residues coordinate Zn(2+): cysteine 126, cysteine 129, cysteine 143, and histidine 147. The 'KMSKS' region signature appears at 301–305 (KMSKS). An ATP-binding site is contributed by lysine 304.

The protein belongs to the class-I aminoacyl-tRNA synthetase family. MetG type 2A subfamily. Monomer. Requires Zn(2+) as cofactor.

The protein localises to the cytoplasm. The catalysed reaction is tRNA(Met) + L-methionine + ATP = L-methionyl-tRNA(Met) + AMP + diphosphate. Its function is as follows. Is required not only for elongation of protein synthesis but also for the initiation of all mRNA translation through initiator tRNA(fMet) aminoacylation. The polypeptide is Methionine--tRNA ligase (metG) (Mycoplasma genitalium (strain ATCC 33530 / DSM 19775 / NCTC 10195 / G37) (Mycoplasmoides genitalium)).